The chain runs to 207 residues: Small ribosomal subunit protein uS4 (207 aa).

One can recognise an S4 RNA-binding domain in the interval 96-156 (SRLDNTVYRM…KKSHKQSRIR (61 aa)).

It belongs to the universal ribosomal protein uS4 family. As to quaternary structure, part of the 30S ribosomal subunit. Contacts protein S5. The interaction surface between S4 and S5 is involved in control of translational fidelity.

Functionally, one of the primary rRNA binding proteins, it binds directly to 16S rRNA where it nucleates assembly of the body of the 30S subunit. Its function is as follows. With S5 and S12 plays an important role in translational accuracy. The sequence is that of Small ribosomal subunit protein uS4 from Blochmanniella pennsylvanica (strain BPEN).